A 191-amino-acid polypeptide reads, in one-letter code: MPKIKMIIGLGNIGKEYQDTRHNVGEWFIAKIAQDNNQSFSSNPKLNCNLAKVSIDYNNVVLVFPTTYMNNSGLAVSKVANFYKIAPAEILVVHDELDIDSGEIRLKKGGGHGGHNGLRSINQHLGTNDYLRLRIGIGHPGHKSKVANYVLSNPSIAQKKDIDSAIDNGICFLDDIINYKLEPVMQKLHTK.

Tyrosine 17 is a tRNA binding site. Histidine 22 functions as the Proton acceptor in the catalytic mechanism. The tRNA site is built by tyrosine 68, asparagine 70, and asparagine 116.

The protein belongs to the PTH family. As to quaternary structure, monomer.

It localises to the cytoplasm. It carries out the reaction an N-acyl-L-alpha-aminoacyl-tRNA + H2O = an N-acyl-L-amino acid + a tRNA + H(+). Its function is as follows. Hydrolyzes ribosome-free peptidyl-tRNAs (with 1 or more amino acids incorporated), which drop off the ribosome during protein synthesis, or as a result of ribosome stalling. Functionally, catalyzes the release of premature peptidyl moieties from peptidyl-tRNA molecules trapped in stalled 50S ribosomal subunits, and thus maintains levels of free tRNAs and 50S ribosomes. This is Peptidyl-tRNA hydrolase from Francisella tularensis subsp. tularensis (strain FSC 198).